The chain runs to 331 residues: UDP-GalNAc:beta-1,3-N-acetylgalactosaminyltransferase 1 (331 aa).

The Cytoplasmic portion of the chain corresponds to 1 to 20; it reads MASALWTVLPSRMSLRSLKW. Residues 21–43 form a helical; Signal-anchor for type II membrane protein membrane-spanning segment; that stretch reads SLLLLSLLSFFVMWYLSLPHYNV. The Lumenal segment spans residues 44 to 331; the sequence is IERVNWMYFY…VMLRNTTCHY (288 aa). N-linked (GlcNAc...) asparagine glycosylation is found at N72, N154, N198, N212, and N326.

It belongs to the glycosyltransferase 31 family. The cofactor is Mg(2+). In terms of tissue distribution, higher expression in heart and brain, and to a lesser extent in lung, placenta, kidney and testis. Lower expression in liver, spleen and stomach. No expression in skeletal muscle.

It is found in the golgi apparatus membrane. The enzyme catalyses a globoside Gb3Cer (d18:1(4E)) + UDP-N-acetyl-alpha-D-galactosamine = a globoside Gb4Cer (d18:1(4E)) + UDP + H(+). The protein operates within protein modification; protein glycosylation. In terms of biological role, transfers N-acetylgalactosamine onto globotriaosylceramide. Plays a critical role in preimplantation stage embryonic development. This Homo sapiens (Human) protein is UDP-GalNAc:beta-1,3-N-acetylgalactosaminyltransferase 1.